We begin with the raw amino-acid sequence, 52 residues long: Large ribosomal subunit protein bL33 (52 aa).

It belongs to the bacterial ribosomal protein bL33 family.

The protein is Large ribosomal subunit protein bL33 of Chlamydia trachomatis serovar A (strain ATCC VR-571B / DSM 19440 / HAR-13).